A 238-amino-acid chain; its full sequence is Ditrans,polycis-undecaprenyl-diphosphate synthase ((2E,6E)-farnesyl-diphosphate specific) (238 aa).

D14 is an active-site residue. D14 serves as a coordination point for Mg(2+). Substrate is bound by residues 15–18 (GNGR), W19, R27, H31, and 59–61 (SSE). The active-site Proton acceptor is N62. Substrate is bound by residues W63, R65, R182, and 188–190 (RIS). E201 contacts Mg(2+).

Belongs to the UPP synthase family. Homodimer. Requires Mg(2+) as cofactor.

The catalysed reaction is 8 isopentenyl diphosphate + (2E,6E)-farnesyl diphosphate = di-trans,octa-cis-undecaprenyl diphosphate + 8 diphosphate. In terms of biological role, catalyzes the sequential condensation of isopentenyl diphosphate (IPP) with (2E,6E)-farnesyl diphosphate (E,E-FPP) to yield (2Z,6Z,10Z,14Z,18Z,22Z,26Z,30Z,34E,38E)-undecaprenyl diphosphate (di-trans,octa-cis-UPP). UPP is the precursor of glycosyl carrier lipid in the biosynthesis of bacterial cell wall polysaccharide components such as peptidoglycan and lipopolysaccharide. This Legionella pneumophila (strain Paris) protein is Ditrans,polycis-undecaprenyl-diphosphate synthase ((2E,6E)-farnesyl-diphosphate specific).